A 742-amino-acid polypeptide reads, in one-letter code: Clamp-binding protein CrfC (742 aa).

Residues 41-45 (QLALP) are clamp-binding consensus. The 337-residue stretch at 66-402 (SRLEMVLAIV…LWEDSLFAQP (337 aa)) folds into the Dynamin-type G domain. The segment at 76-83 (GTMKAGKS) is G1 motif. The tract at residues 102-104 (MTA) is G2 motif. Residues 236–239 (DTPG) form a G3 motif region. The G4 motif stretch occupies residues 297–300 (NKFD). A G5 motif region spans residues 331–334 (FPVS). Residues 440-472 (RAHGLNVACEQLRQNIHQIEESLQLLQLNQAQV) adopt a coiled-coil conformation.

This sequence belongs to the TRAFAC class dynamin-like GTPase superfamily. Dynamin/Fzo/YdjA family. As to quaternary structure, forms homooligomers. Binds to the beta sliding clamp processivity factor (DnaN) in the presence and absence of DNA, may bind to the clamp itself as homodimers or trimers. Homooligomers may be able to bind more than 1 clamp complex.

It localises to the cytoplasm. Functionally, important for the colocalization of sister nascent DNA strands after replication fork passage during DNA replication, and for positioning and subsequent partitioning of sister chromosomes. Does not have GTPase activity on its own. The protein is Clamp-binding protein CrfC (crfC) of Escherichia coli (strain K12).